The chain runs to 319 residues: Acetyl-coenzyme A carboxylase carboxyl transferase subunit alpha (319 aa).

Residues 35-296 (NIDEEVHRLR…KAQLLEDLAD (262 aa)) form the CoA carboxyltransferase C-terminal domain.

The protein belongs to the AccA family. As to quaternary structure, acetyl-CoA carboxylase is a heterohexamer composed of biotin carboxyl carrier protein (AccB), biotin carboxylase (AccC) and two subunits each of ACCase subunit alpha (AccA) and ACCase subunit beta (AccD).

It is found in the cytoplasm. It carries out the reaction N(6)-carboxybiotinyl-L-lysyl-[protein] + acetyl-CoA = N(6)-biotinyl-L-lysyl-[protein] + malonyl-CoA. It functions in the pathway lipid metabolism; malonyl-CoA biosynthesis; malonyl-CoA from acetyl-CoA: step 1/1. In terms of biological role, component of the acetyl coenzyme A carboxylase (ACC) complex. First, biotin carboxylase catalyzes the carboxylation of biotin on its carrier protein (BCCP) and then the CO(2) group is transferred by the carboxyltransferase to acetyl-CoA to form malonyl-CoA. The protein is Acetyl-coenzyme A carboxylase carboxyl transferase subunit alpha of Salmonella arizonae (strain ATCC BAA-731 / CDC346-86 / RSK2980).